The primary structure comprises 418 residues: PP2A regulatory subunit TAP46 (418 aa).

The tract at residues 367 to 418 is disordered; that stretch reads KMIQESNSAWHKDGSRSAQEDEDAEEEKARAWDDWKDDNPRGAGNKKLTPCG. 2 stretches are compositionally biased toward basic and acidic residues: residues 376–385 and 393–406; these read WHKDGSRSAQ and EKAR…DDNP.

Belongs to the IGBP1/TAP42 family.

In terms of biological role, involved in the regulation of the TOR signaling pathway. Seems to act as a regulator of PP2A catalytic activity. The sequence is that of PP2A regulatory subunit TAP46 from Oryza sativa subsp. japonica (Rice).